Reading from the N-terminus, the 493-residue chain is Tripartite motif-containing protein 5 (493 aa).

Alanine 2 carries the post-translational modification N-acetylalanine. The RING-type zinc finger occupies 15–59 (CPICLELLTQPLSLDCGHSFCQACLTANHKKSMLDKGESSCPVCR). Serine 86 bears the Phosphoserine mark. The segment at 90 to 132 (QKVDHCAHHGEKLLLFCQEDGKVICWLCERSQEHRGHHTFLTE) adopts a B box-type zinc-finger fold. Zn(2+)-binding residues include cysteine 95, histidine 98, cysteine 117, and histidine 123. Positions 131–240 (TEEVAREYQV…LISDLERRLQ (110 aa)) form a coiled coil. Residues 185–198 (FEQLRDILDWEESN) are required for interaction with GABARAP and for autophagy. Positions 281-493 (LKGMLEVFRE…VPMTLCSPSS (213 aa)) constitute a B30.2/SPRY domain.

It belongs to the TRIM/RBCC family. Can form homodimers and homotrimers. In addition to lower-order dimerization, also exhibits a higher-order multimerization and both low- and high-order multimerizations are essential for its restriction activity. Interacts with BTBD1 and BTBD2. Interacts with PSMC4, PSMC5, PSMD7 and HSPA8/HSC70. Interacts (via B30.2/SPRY domain) with HSPA1A/B. Interacts with PSMC2, MAP3K7/TAK1, TAB2 and TAB3. Interacts with SQSTM1. Interacts with TRIM6 and TRIM34. Interacts with ULK1 (phosphorylated form), GABARAP, GABARAPL1, GABARAPL2, MAP1LC3A, MAP1LC3C and BECN1. In terms of processing, degraded in a proteasome-independent fashion in the absence of viral infection but in a proteasome-dependent fashion following exposure to restriction sensitive virus. Autoubiquitinated in a RING finger- and UBE2D2-dependent manner. Monoubiquitinated by TRIM21. Deubiquitinated by Yersinia YopJ. Ubiquitination may not lead to proteasomal degradation.

The protein resides in the cytoplasm. It localises to the nucleus. It carries out the reaction S-ubiquitinyl-[E2 ubiquitin-conjugating enzyme]-L-cysteine + [acceptor protein]-L-lysine = [E2 ubiquitin-conjugating enzyme]-L-cysteine + N(6)-ubiquitinyl-[acceptor protein]-L-lysine.. It participates in protein modification; protein ubiquitination. Its function is as follows. Capsid-specific restriction factor that prevents infection from non-host-adapted retroviruses. Blocks viral replication early in the life cycle, after viral entry but before reverse transcription. In addition to acting as a capsid-specific restriction factor, also acts as a pattern recognition receptor that activates innate immune signaling in response to the retroviral capsid lattice. Binding to the viral capsid triggers its E3 ubiquitin ligase activity, and in concert with the heterodimeric ubiquitin conjugating enzyme complex UBE2V1-UBE2N (also known as UBC13-UEV1A complex) generates 'Lys-63'-linked polyubiquitin chains, which in turn are catalysts in the autophosphorylation of the MAP3K7/TAK1 complex (includes TAK1, TAB2, and TAB3). Activation of the MAP3K7/TAK1 complex by autophosphorylation results in the induction and expression of NF-kappa-B and MAPK-responsive inflammatory genes, thereby leading to an innate immune response in the infected cell. Plays a role in regulating autophagy through activation of autophagy regulator BECN1 by causing its dissociation from its inhibitors BCL2 and TAB2. The protein is Tripartite motif-containing protein 5 (TRIM5) of Pan troglodytes (Chimpanzee).